Consider the following 675-residue polypeptide: Alpha-1,4-glucan:maltose-1-phosphate maltosyltransferase (675 aa).

Residues Lys256, Gln316, and Asp351 each contribute to the alpha-maltose 1-phosphate site. Catalysis depends on Asp386, which acts as the Nucleophile. Asn387 is an alpha-maltose 1-phosphate binding site. Catalysis depends on Glu415, which acts as the Proton donor. 525-526 (KY) lines the alpha-maltose 1-phosphate pocket.

Belongs to the glycosyl hydrolase 13 family. GlgE subfamily. Homodimer.

It carries out the reaction alpha-maltose 1-phosphate + [(1-&gt;4)-alpha-D-glucosyl](n) = [(1-&gt;4)-alpha-D-glucosyl](n+2) + phosphate. Functionally, maltosyltransferase that uses maltose 1-phosphate (M1P) as the sugar donor to elongate linear or branched alpha-(1-&gt;4)-glucans. Is involved in a branched alpha-glucan biosynthetic pathway from trehalose, together with TreS, Mak and GlgB. The sequence is that of Alpha-1,4-glucan:maltose-1-phosphate maltosyltransferase from Corynebacterium glutamicum (strain ATCC 13032 / DSM 20300 / JCM 1318 / BCRC 11384 / CCUG 27702 / LMG 3730 / NBRC 12168 / NCIMB 10025 / NRRL B-2784 / 534).